Consider the following 104-residue polypeptide: Large ribosomal subunit protein bL21 (104 aa).

This sequence belongs to the bacterial ribosomal protein bL21 family. In terms of assembly, part of the 50S ribosomal subunit. Contacts protein L20.

This protein binds to 23S rRNA in the presence of protein L20. The chain is Large ribosomal subunit protein bL21 from Rhodopirellula baltica (strain DSM 10527 / NCIMB 13988 / SH1).